We begin with the raw amino-acid sequence, 178 residues long: Sec-independent protein translocase protein TatB (178 aa).

Residues 2 to 22 (LPEIGAAELLIIAAVALIVVG) form a helical membrane-spanning segment. A disordered region spans residues 104–178 (HSPTGYENTV…KARKTAGSAE (75 aa)). Over residues 114-131 (EPPPPEPEPQPAAEPAPK) the composition is skewed to pro residues. The segment covering 141-154 (PKAAAAPKAAAKPK) has biased composition (low complexity).

The protein belongs to the TatB family. As to quaternary structure, the Tat system comprises two distinct complexes: a TatABC complex, containing multiple copies of TatA, TatB and TatC subunits, and a separate TatA complex, containing only TatA subunits. Substrates initially bind to the TatABC complex, which probably triggers association of the separate TatA complex to form the active translocon.

It is found in the cell inner membrane. Part of the twin-arginine translocation (Tat) system that transports large folded proteins containing a characteristic twin-arginine motif in their signal peptide across membranes. Together with TatC, TatB is part of a receptor directly interacting with Tat signal peptides. TatB may form an oligomeric binding site that transiently accommodates folded Tat precursor proteins before their translocation. The polypeptide is Sec-independent protein translocase protein TatB (Phenylobacterium zucineum (strain HLK1)).